A 263-amino-acid polypeptide reads, in one-letter code: Ribonuclease HII (263 aa).

The region spanning 71 to 262 (KAIAGIDEVG…VKSMCCDSTN (192 aa)) is the RNase H type-2 domain. A divalent metal cation is bound by residues aspartate 77, glutamate 78, and aspartate 172.

This sequence belongs to the RNase HII family. Mn(2+) is required as a cofactor. Mg(2+) serves as cofactor.

The protein localises to the cytoplasm. It carries out the reaction Endonucleolytic cleavage to 5'-phosphomonoester.. Endonuclease that specifically degrades the RNA of RNA-DNA hybrids. This chain is Ribonuclease HII, found in Streptococcus pyogenes serotype M1.